Reading from the N-terminus, the 479-residue chain is F-box/LRR-repeat protein 16 (479 aa).

The tract at residues 1–62 (MSSPGIDGDP…PTLPPPSLAA (62 aa)) is disordered. The span at 47–60 (CQPPPPPTLPPPSL) shows a compositional bias: pro residues. Arginine 92 carries the omega-N-methylarginine modification. Positions 94 to 139 (PLATDEKILNGLFWYFSACEKCVLAQVCKAWRRVLYQPKFWAGLTP) constitute an F-box domain. 7 LRR repeats span residues 244 to 266 (ITSL…ISQL), 267 to 290 (LPNL…YFTA), 319 to 343 (LPNL…LVAE), 345 to 369 (LRKL…YVAC), 371 to 395 (LHRL…YLST), 396 to 420 (MSSL…HLLA), and 446 to 470 (LQEL…YFSQ).

As to quaternary structure, interacts with SKP1 and CUL1.

In terms of biological role, substrate-recognition component of the SCF (SKP1-CUL1-F-box protein)-type E3 ubiquitin ligase complex. This is F-box/LRR-repeat protein 16 (FBXL16) from Homo sapiens (Human).